The sequence spans 406 residues: Homocysteine-responsive endoplasmic reticulum-resident ubiquitin-like domain member 2 protein (406 aa).

The 80-residue stretch at 10 to 89 (VTLIIKAPNQ…HMVHLVCTSR (80 aa)) folds into the Ubiquitin-like domain. Residues 86 to 154 (CTSRTPPSSP…TLPQAQTDQA (69 aa)) are disordered. Composition is skewed to low complexity over residues 87–98 (TSRTPPSSPKSS) and 106–126 (ALASSSNSSSDHSGSTTPSSG). Residues 127–154 (QETLSLAVGSSSEGLRQRTLPQAQTDQA) show a composition bias toward polar residues. The helical transmembrane segment at 302 to 322 (FIMVMGAMLLVYLHQAGWFPF) threads the bilayer.

Its subcellular location is the membrane. Functionally, could be involved in the unfolded protein response (UPR) pathway. This is Homocysteine-responsive endoplasmic reticulum-resident ubiquitin-like domain member 2 protein (HERPUD2) from Homo sapiens (Human).